Here is a 198-residue protein sequence, read N- to C-terminus: Na(+)-translocating NADH-quinone reductase subunit E (198 aa).

Transmembrane regions (helical) follow at residues 11 to 31, 39 to 59, 77 to 97, 110 to 130, 140 to 160, and 176 to 196; these read SIFI…FLAV, FGLG…NNLV, FLNF…LEMV, GIFL…SFMV, IVYG…LAGI, and LGIT…FSGV.

This sequence belongs to the NqrDE/RnfAE family. As to quaternary structure, composed of six subunits; NqrA, NqrB, NqrC, NqrD, NqrE and NqrF.

Its subcellular location is the cell inner membrane. It catalyses the reaction a ubiquinone + n Na(+)(in) + NADH + H(+) = a ubiquinol + n Na(+)(out) + NAD(+). In terms of biological role, NQR complex catalyzes the reduction of ubiquinone-1 to ubiquinol by two successive reactions, coupled with the transport of Na(+) ions from the cytoplasm to the periplasm. NqrA to NqrE are probably involved in the second step, the conversion of ubisemiquinone to ubiquinol. The chain is Na(+)-translocating NADH-quinone reductase subunit E from Vibrio campbellii (strain ATCC BAA-1116).